The primary structure comprises 525 residues: GMP synthase [glutamine-hydrolyzing] (525 aa).

The region spanning 8–207 (KILILDFGSQ…ALDICGCDAN (200 aa)) is the Glutamine amidotransferase type-1 domain. The active-site Nucleophile is the C85. Active-site residues include H181 and E183. Positions 208–400 (WKPSSIIEDA…LGLPYDMLYR (193 aa)) constitute a GMPS ATP-PPase domain. 235–241 (SGGVDSS) provides a ligand contact to ATP.

In terms of assembly, homodimer.

The enzyme catalyses XMP + L-glutamine + ATP + H2O = GMP + L-glutamate + AMP + diphosphate + 2 H(+). The protein operates within purine metabolism; GMP biosynthesis; GMP from XMP (L-Gln route): step 1/1. Catalyzes the synthesis of GMP from XMP. This Shewanella piezotolerans (strain WP3 / JCM 13877) protein is GMP synthase [glutamine-hydrolyzing].